Reading from the N-terminus, the 628-residue chain is MLRSSITQSRQLLLSPARSRTASQWLPRAGASNRISGQRFFADVKPPVVPGAPTPASPSSDTPIPPETVPKSTLADEATLPPPPPPPPAPVRKTGRFRRFLIYLILTSGFAYGGGIFLAMKSDNFHDFFTEYVPYGEDCVLYFEERDFYRRFPNTLRNANRAPKDEGNKVTIPSKSGLSWKVAEEESGADLSAKGPHMSAVEQKGDEAQIKPGTAKPEEKVAAVEKAKSDKPVKEEAPKDTTKVQEEPRKPAVPAVTPIEFATVNEGDEAVVQELVKTFNDIITVIGADESAHKFSGTIIKAKDELQKIGEKIIAIRDEARNAAQEEIKEAHATFDESARELIRRFEEARASDAAQYREEFELEREKLAHAYQEKIRTELLRAQEVAEQRLQNELVEQAIELNRKYLHEVKDLVEREREGRLSKLNELTTNVTELEKLTTDWKEVIDTNLKTQQLQVAVDAVRSVLERSTVPRPFVRELVAVKELAAEDPVVEAAIASINPTAYQRGIPSTAQIIERFRRVADEVRKASLLPEDAGIASHAASLVLSKVMFKKDAVAGSDDVESILIRTESLLEEGNIDAAAREMNTLKGWAKILSKDWLGDVRRVLEVKQALEVIETEARLQCLRVE.

Positions 1 to 24 (MLRSSITQSRQLLLSPARSRTASQ) are enriched in polar residues. Disordered regions lie at residues 1–30 (MLRS…PRAG) and 44–92 (VKPP…APVR). Residues 1–41 (MLRSSITQSRQLLLSPARSRTASQWLPRAGASNRISGQRFF) constitute a mitochondrion transit peptide. Residues 42–99 (ADVKPPVVPGAPTPASPSSDTPIPPETVPKSTLADEATLPPPPPPPPAPVRKTGRFRR) are Mitochondrial matrix-facing. Pro residues-rich tracts occupy residues 47 to 56 (PVVPGAPTPA) and 80 to 90 (LPPPPPPPPAP). A helical membrane pass occupies residues 100–120 (FLIYLILTSGFAYGGGIFLAM). At 121-628 (KSDNFHDFFT…EARLQCLRVE (508 aa)) the chain is on the mitochondrial intermembrane side. Positions 183–252 (AEEESGADLS…KVQEEPRKPA (70 aa)) are disordered. Positions 216 to 250 (KPEEKVAAVEKAKSDKPVKEEAPKDTTKVQEEPRK) are enriched in basic and acidic residues. Residues 301-444 (KAKDELQKIG…LEKLTTDWKE (144 aa)) are a coiled coil.

This sequence belongs to the MICOS complex subunit Mic60 family. Component of the mitochondrial contact site and cristae organizing system (MICOS) complex.

It localises to the mitochondrion inner membrane. Functionally, component of the MICOS complex, a large protein complex of the mitochondrial inner membrane that plays crucial roles in the maintenance of crista junctions, inner membrane architecture, and formation of contact sites to the outer membrane. Plays a role in keeping cristae membranes connected to the inner boundary membrane. Also promotes protein import via the mitochondrial intermembrane space assembly (MIA) pathway. The protein is MICOS complex subunit mic60 (mic60) of Aspergillus clavatus (strain ATCC 1007 / CBS 513.65 / DSM 816 / NCTC 3887 / NRRL 1 / QM 1276 / 107).